Here is a 220-residue protein sequence, read N- to C-terminus: dTTP/UTP pyrophosphatase (220 aa).

Asp-83 (proton acceptor) is an active-site residue.

Belongs to the Maf family. YhdE subfamily. A divalent metal cation is required as a cofactor.

The protein localises to the cytoplasm. It carries out the reaction dTTP + H2O = dTMP + diphosphate + H(+). It catalyses the reaction UTP + H2O = UMP + diphosphate + H(+). In terms of biological role, nucleoside triphosphate pyrophosphatase that hydrolyzes dTTP and UTP. May have a dual role in cell division arrest and in preventing the incorporation of modified nucleotides into cellular nucleic acids. This is dTTP/UTP pyrophosphatase from Syntrophotalea carbinolica (strain DSM 2380 / NBRC 103641 / GraBd1) (Pelobacter carbinolicus).